Here is a 284-residue protein sequence, read N- to C-terminus: UPF0276 protein PA3283 (284 aa).

This sequence belongs to the UPF0276 family.

This Pseudomonas aeruginosa (strain ATCC 15692 / DSM 22644 / CIP 104116 / JCM 14847 / LMG 12228 / 1C / PRS 101 / PAO1) protein is UPF0276 protein PA3283.